The chain runs to 127 residues: Glycine cleavage system H protein 2 (127 aa).

Positions 24-105 (SVTVGISDHA…PYGSWIFKLK (82 aa)) constitute a Lipoyl-binding domain. N6-lipoyllysine is present on K65.

This sequence belongs to the GcvH family. In terms of assembly, the glycine cleavage system is composed of four proteins: P, T, L and H. It depends on (R)-lipoate as a cofactor.

Its function is as follows. The glycine cleavage system catalyzes the degradation of glycine. The H protein shuttles the methylamine group of glycine from the P protein to the T protein. The sequence is that of Glycine cleavage system H protein 2 from Pseudomonas putida (strain ATCC 47054 / DSM 6125 / CFBP 8728 / NCIMB 11950 / KT2440).